The primary structure comprises 1923 residues: Callose synthase 5 (1923 aa).

Residues 1-10 (MAQSSTSHDS) show a composition bias toward polar residues. The interval 1 to 22 (MAQSSTSHDSGPQGLMRRPSRS) is disordered. At 1–481 (MAQSSTSHDS…ETRTFWHIYH (481 aa)) the chain is on the cytoplasmic side. Residues 482–502 (SFDRLWTFYLLALQAMIILAF) traverse the membrane as a helical segment. The Extracellular segment spans residues 503–521 (ERVELREILRKDVLYALSS). The helical transmembrane segment at 522–542 (IFITAAFLRFLQSVLDVILNF) threads the bilayer. Residues 543 to 559 (PGFHRWKFTDVLRNILK) lie on the Cytoplasmic side of the membrane. Residues 560–580 (IVVSLAWCVVLPLCYAQSVSF) traverse the membrane as a helical segment. Topologically, residues 581–601 (APGKLKQWLSFLPQVKGVPPL) are extracellular. Residues 602-622 (YIMAVALYLLPNVLAAIMFIF) form a helical membrane-spanning segment. At 623–658 (PMLRRWIENSDWHIFRLLLWWSQPRIYVGRGMHESQ) the chain is on the cytoplasmic side. A helical transmembrane segment spans residues 659 to 679 (IALIKYTIFWLLLFCCKFAFS). Residues 680 to 719 (YFLQVKLLVKPTNAIMSIRHVKYKWHEFFPNAEHNYGAVV) are Extracellular-facing. Residues 720-740 (SLWLPVILVYFMDTQIWYAIF) form a helical membrane-spanning segment. The Cytoplasmic segment spans residues 741 to 1486 (STICGGVIGA…FDFFRMMSCY (746 aa)). Residues 1487 to 1507 (FTTVGFYISSMIVVLTVYAFL) traverse the membrane as a helical segment. The Extracellular portion of the chain corresponds to 1508 to 1535 (YGRLYLSLSGVEEAIVKFAAAKGDSSLK). A helical transmembrane segment spans residues 1536-1556 (AAMASQSVVQLGLLMTLPMVM). Topologically, residues 1557–1566 (EIGLERGFRT) are cytoplasmic. A helical transmembrane segment spans residues 1567 to 1587 (ALSDLIIMQLQLAPVFFTFSL). The Extracellular portion of the chain corresponds to 1588–1630 (GTKVHYYGRTILHGGSKYRATGRGFVVKHEKFAENYRMYSRSH). The chain crosses the membrane as a helical span at residues 1631–1651 (FVKGMELMVLLICYRIYGKAA). Residues 1652–1657 (EDSVGY) lie on the Cytoplasmic side of the membrane. The chain crosses the membrane as a helical span at residues 1658–1678 (ALVMGSTWFLVGSWLFAPFFF). The Extracellular portion of the chain corresponds to 1679 to 1732 (NPSGFEWQKIVDDWDDWNKWISSRGGIGVPANKSWESWWEEEQEHLLHSGFFGK). Residue asparagine 1710 is glycosylated (N-linked (GlcNAc...) asparagine). A helical transmembrane segment spans residues 1733–1755 (FWEIFLSLRYFIYQYGIVYQLNL). At 1756–1766 (TKESRMGKQHS) the chain is on the cytoplasmic side. The chain crosses the membrane as a helical span at residues 1767–1787 (IIVYGLSWLVIVAVMIVLKIV). The Extracellular portion of the chain corresponds to 1788 to 1803 (SMGRKKFSADFQLMFR). A helical transmembrane segment spans residues 1804–1824 (LLKLFLFIGSVVIVGMLFHFL). Residue lysine 1825 is a topological domain, cytoplasmic. The helical transmembrane segment at 1826-1846 (LTVGDIMQSLLAFLPTGWALL) threads the bilayer. Residues 1847–1873 (QISQVARPLMKTVGMWGSVKALARGYE) are Extracellular-facing. The chain crosses the membrane as a helical span at residues 1874–1894 (YIMGVVIFMPVTVLAWFPFVS). Residues 1895-1923 (EFQTRLLFNQAFSRGLQIQRILAGGKKQK) are Cytoplasmic-facing.

Belongs to the glycosyltransferase 48 family.

The protein localises to the cell membrane. The enzyme catalyses [(1-&gt;3)-beta-D-glucosyl](n) + UDP-alpha-D-glucose = [(1-&gt;3)-beta-D-glucosyl](n+1) + UDP + H(+). Its function is as follows. Required for the formation of the callose wall separating the tetraspores (interstitial wall) and surrounding the pollen mother cells (peripheral wall). Required for exine formation on pollen wall. May be involved in callose synthesis during pollen tube growth. During plant growth and development, callose is found as a transitory component of the cell plate in dividing cells, is a major component of pollen mother cell walls and pollen tubes, and is found as a structural component of plasmodesmatal canals. In Arabidopsis thaliana (Mouse-ear cress), this protein is Callose synthase 5 (CALS5).